We begin with the raw amino-acid sequence, 87 residues long: Small ribosomal subunit protein uS17 (87 aa).

This sequence belongs to the universal ribosomal protein uS17 family. Part of the 30S ribosomal subunit.

One of the primary rRNA binding proteins, it binds specifically to the 5'-end of 16S ribosomal RNA. The sequence is that of Small ribosomal subunit protein uS17 from Listeria innocua serovar 6a (strain ATCC BAA-680 / CLIP 11262).